The following is a 370-amino-acid chain: Prolactin-releasing peptide receptor (370 aa).

Over 1 to 62 (MASSTTRGPR…LQLVHQLKGL (62 aa)) the chain is Extracellular. N27 and N36 each carry an N-linked (GlcNAc...) asparagine glycan. The chain crosses the membrane as a helical span at residues 63-83 (IVLLYSVVVVVGLVGNCLLVL). Topologically, residues 84–101 (VIARVRRLHNVTNFLIGN) are cytoplasmic. The chain crosses the membrane as a helical span at residues 102-122 (LALSDVLMCTACVPLTLAYAF). The Extracellular portion of the chain corresponds to 123–126 (EPRG). The helical transmembrane segment at 127–147 (WVFGGGLCHLVFFLQPVTVYV) threads the bilayer. C134 and C211 are disulfide-bonded. Residues 148 to 175 (SVFTLTTIAVDRYVVLVHPLRRRISLRL) are Cytoplasmic-facing. The helical transmembrane segment at 176–196 (SAYAVLAIWALSAVLALPAAV) threads the bilayer. Over 197–225 (HTYHVELKPHDVRLCEEFWGSQERQRQLY) the chain is Extracellular. The chain crosses the membrane as a helical span at residues 226–246 (AWGLLLVTYLLPLLVILLSYV). The Cytoplasmic segment spans residues 247–276 (RVSVKLRNRVVPGCVTQSQADWDRARRRRT). The chain crosses the membrane as a helical span at residues 277–297 (FCLLVVIVVVFAVCWLPLHVF). The Extracellular portion of the chain corresponds to 298-317 (NLLRDLDPHAIDPYAFGLVQ). The chain crosses the membrane as a helical span at residues 318–338 (LLCHWLAMSSACYNPFIYAWL). The Cytoplasmic portion of the chain corresponds to 339-369 (HDSFREELRKLLVAWPRKIAPHGQNMTVSVV). The segment at 365–370 (TVSVVI) is required for interaction with GRIP1, GRIP2 and PICK1.

Belongs to the G-protein coupled receptor 1 family. As to quaternary structure, interacts through its C-terminal region with the PDZ domain-containing proteins GRIP1, GRIP2 and PICK1. Interacts with PDZ domains 4 and 5 of GRIP1 and with the PDZ domain of PICK1. In terms of tissue distribution, only detected in the pituitary gland and in all cell types of pituitary adenomas.

The protein localises to the cell membrane. Functionally, receptor for prolactin-releasing peptide (PrRP). Implicated in lactation, regulation of food intake and pain-signal processing. This chain is Prolactin-releasing peptide receptor (PRLHR), found in Homo sapiens (Human).